The following is a 482-amino-acid chain: GTPase Obg (482 aa).

Residues 2 to 159 (PRFVDRVVIH…VDLTLELKTV (158 aa)) enclose the Obg domain. The OBG-type G domain maps to 160–340 (ADVGLVGFPS…LTFALWEMIV (181 aa)). Residues 166-173 (GFPSAGKS), 191-195 (FTTLV), 212-215 (DVPG), 292-295 (NKVD), and 321-323 (STL) contribute to the GTP site. Positions 173 and 193 each coordinate Mg(2+). The region spanning 358-438 (PIPVDESGFT…IGDMTFDWEP (81 aa)) is the OCT domain. Residues 441–482 (PAGVDVTMSGRGTDARIDKTDRVGAAERRQARRVRRGQVEPE) are disordered. The span at 453–469 (TDARIDKTDRVGAAERR) shows a compositional bias: basic and acidic residues.

It belongs to the TRAFAC class OBG-HflX-like GTPase superfamily. OBG GTPase family. In terms of assembly, monomer. Mg(2+) serves as cofactor.

It is found in the cytoplasm. Its function is as follows. An essential GTPase which binds GTP, GDP and possibly (p)ppGpp with moderate affinity, with high nucleotide exchange rates and a fairly low GTP hydrolysis rate. Plays a role in control of the cell cycle, stress response, ribosome biogenesis and in those bacteria that undergo differentiation, in morphogenesis control. The polypeptide is GTPase Obg (Mycobacteroides abscessus (strain ATCC 19977 / DSM 44196 / CCUG 20993 / CIP 104536 / JCM 13569 / NCTC 13031 / TMC 1543 / L948) (Mycobacterium abscessus)).